Consider the following 956-residue polypeptide: MAM domain-containing glycosylphosphatidylinositol anchor protein 1 (956 aa).

An N-terminal signal peptide occupies residues 1-18; it reads MEVTCLLLLALIPFHCRG. Ig-like domains are found at residues 24–123 and 132–230; these read PAQA…KSIR and PVLT…KSIT. The N-linked (GlcNAc...) asparagine glycan is linked to N42. 2 disulfide bridges follow: C60–C108 and C157–C214. N-linked (GlcNAc...) asparagine glycans are attached at residues N235, N257, and N307. 4 consecutive Ig-like domains span residues 240–323, 338–432, 440–534, and 539–632; these read PTLK…KTVN, PDMI…VEVN, PTIS…VQLT, and PEVE…FQVS. Disulfide bonds link C262–C308, C357–C415, C463–C514, and C560–C616. The Fibronectin type-III domain occupies 644–744; sequence TPNPTRSHKL…SRVIHYTEPI (101 aa). Positions 752–919 constitute an MAM domain; the sequence is NTCHFEDEKI…VTLKKGECPR (168 aa). The segment covering 780–789 has biased composition (polar residues); sequence LTQNPKRSPN. The disordered stretch occupies residues 780-799; sequence LTQNPKRSPNTGPPTDISGT. S933 carries the GPI-anchor amidated serine lipid modification. Positions 934–956 are cleaved as a propeptide — removed in mature form; it reads GAPRLSSLQLWGSMTIFLLALQR.

In terms of assembly, interacts heterophilically through its MAM domain with proteins in axon-rich regions and through its Ig-like domains with proteins in differentiating muscle. Interacts (through the Ig-like domains) with NLGN2. In terms of tissue distribution, high levels detected in developing central and peripheral nervous systems with little expression elsewhere. In brain, highest levels in cerebral cortex and hindbrain at E15. At postnatal day 1, highest levels in basilar pons and superficial layers of the neocortex. In the developing spinal cord, restricted to a subpopulation of neurons in the dorsal and spinal ventral cord, probably D1 interneurons. Expressed in brain.

Its subcellular location is the cell membrane. In terms of biological role, required for radial migration of cortical neurons in the superficial layer of the neocortex. Plays a role in the formation or maintenance of inhibitory synapses. May function by inhibiting the activity of NLGN2. This chain is MAM domain-containing glycosylphosphatidylinositol anchor protein 1 (Mdga1), found in Rattus norvegicus (Rat).